The chain runs to 264 residues: Hydroxyethylthiazole kinase (264 aa).

Met47 provides a ligand contact to substrate. ATP-binding residues include Arg123 and Ser169. Substrate is bound at residue Gly196.

This sequence belongs to the Thz kinase family. The cofactor is Mg(2+).

It catalyses the reaction 5-(2-hydroxyethyl)-4-methylthiazole + ATP = 4-methyl-5-(2-phosphooxyethyl)-thiazole + ADP + H(+). It functions in the pathway cofactor biosynthesis; thiamine diphosphate biosynthesis; 4-methyl-5-(2-phosphoethyl)-thiazole from 5-(2-hydroxyethyl)-4-methylthiazole: step 1/1. Catalyzes the phosphorylation of the hydroxyl group of 4-methyl-5-beta-hydroxyethylthiazole (THZ). The chain is Hydroxyethylthiazole kinase from Brachyspira hyodysenteriae (strain ATCC 49526 / WA1).